We begin with the raw amino-acid sequence, 1030 residues long: E3 ubiquitin-protein ligase mib1 (1030 aa).

The 69-residue stretch at Asn6 to Ala74 folds into the MIB/HERC2 1 domain. The ZZ-type zinc finger occupies His80–Ser132. Residues Cys85, Cys88, Cys100, Cys103, Cys109, Cys112, His118, and His122 each contribute to the Zn(2+) site. The region spanning Ser143 to Ala221 is the MIB/HERC2 2 domain. ANK repeat units lie at residues Asp430–Gly460, Ala463–Ala492, Asp496–Ala525, Arg529–Leu558, Glu562–Ile591, Asn595–Glu627, Asp631–Val661, Asn665–Val694, and Asp698–Val727. 2 RING-type zinc fingers span residues Cys817–Lys852 and Cys864–Arg899. The stretch at Ala957–Met986 forms a coiled coil. An RING-type 3 zinc finger spans residues Cys987–Arg1020.

As to quaternary structure, interacts with deltaA (dla) and deltaD (dld).

Its subcellular location is the cytoplasm. The protein resides in the cytoskeleton. The protein localises to the microtubule organizing center. It is found in the centrosome. It localises to the centriolar satellite. Its subcellular location is the cell membrane. The enzyme catalyses S-ubiquitinyl-[E2 ubiquitin-conjugating enzyme]-L-cysteine + [acceptor protein]-L-lysine = [E2 ubiquitin-conjugating enzyme]-L-cysteine + N(6)-ubiquitinyl-[acceptor protein]-L-lysine.. The protein operates within protein modification; protein ubiquitination. Its function is as follows. E3 ubiquitin-protein ligase that mediates ubiquitination of Delta receptors, which act as ligands of Notch proteins. Positively regulates the Delta-mediated Notch signaling by ubiquitinating the intracellular domain of Delta, leading to endocytosis of Delta receptors. It thereby participates in many processes regulated by the Notch signaling pathway, such as midline cell fate specification prior to germ layer formation, patterning of sensory cell differentiation in the ear, neurogenesis of the hindbrain and commitment to a secretory fate in the intestine. Essential for early embryonic development. The protein is E3 ubiquitin-protein ligase mib1 (mib1) of Danio rerio (Zebrafish).